Reading from the N-terminus, the 101-residue chain is Large ribosomal subunit protein eL30 (101 aa).

The protein belongs to the eukaryotic ribosomal protein eL30 family.

This chain is Large ribosomal subunit protein eL30 (rpl30e), found in Thermococcus celer.